Reading from the N-terminus, the 419-residue chain is G protein-activated inward rectifier potassium channel 4 (419 aa).

A disordered region spans residues 1–24; the sequence is MAGDSRNAMNQDMEIGVTPRDPKK. At 1 to 86 the chain is on the cytoplasmic side; that stretch reads MAGDSRNAMN…LFTTLVDLKW (86 aa). Position 5 is a phosphoserine (Ser-5). A helical transmembrane segment spans residues 87–111; that stretch reads RFNLLVFTMVYTITWLFFGFIWWLI. At 112–135 the chain is on the extracellular side; it reads AYIRGDLDHVGDREWIPCVENLSG. The helical; Pore-forming intramembrane region spans 136–147; the sequence is FVSAFLFSIETE. Positions 148–154 form an intramembrane region, pore-forming; that stretch reads TTIGYGF. A Selectivity filter motif is present at residues 149–154; sequence TIGYGF. The Extracellular portion of the chain corresponds to 155–163; the sequence is RVITEKCPE. The chain crosses the membrane as a helical span at residues 164-185; it reads GIVLLLVQAILGSIVNAFMVGC. Residues 186–419 are Cytoplasmic-facing; it reads MFVKISQPKK…SGSQETKDSA (234 aa). A disordered region spans residues 381 to 419; the sequence is PSPPLPGGCVGAELGAEAEQEGEEEPEGLSGSQETKDSA. Positions 396–407 are enriched in acidic residues; the sequence is AEAEQEGEEEPE.

This sequence belongs to the inward rectifier-type potassium channel (TC 1.A.2.1) family. KCNJ5 subfamily. In terms of assembly, associates with KCNJ3/GIRK1 or KCNJ6/GIRK2 to form a G-protein-activated heteromultimer pore-forming unit. The resulting inward current is much larger.

It localises to the membrane. The catalysed reaction is K(+)(in) = K(+)(out). Heteromultimer composed of KCNJ3/GIRK1 and KCNJ5/GIRK4 is activated by phosphatidylinositol 4,5 biphosphate (PtdIns(4,5)P2). Its function is as follows. Inward rectifier potassium channels are characterized by a greater tendency to allow potassium to flow into the cell rather than out of it. Their voltage dependence is regulated by the concentration of extracellular potassium; as external potassium is raised, the voltage range of the channel opening shifts to more positive voltages. The inward rectification is mainly due to the blockage of outward current by internal magnesium. This receptor plays a crucial role in regulating the heartbeat. Can be blocked by external barium. This potassium channel is controlled by G proteins. This Bos taurus (Bovine) protein is G protein-activated inward rectifier potassium channel 4 (KCNJ5).